A 197-amino-acid polypeptide reads, in one-letter code: Nucleoid occlusion factor SlmA (197 aa).

Residues 7–67 (ISRREHILQC…GLIEFIEDSL (61 aa)) enclose the HTH tetR-type domain. The segment at residues 30 to 49 (TTAKLAAEVGVSEAALYRHF) is a DNA-binding region (H-T-H motif).

The protein belongs to the nucleoid occlusion factor SlmA family. As to quaternary structure, homodimer. Interacts with FtsZ.

It is found in the cytoplasm. The protein localises to the nucleoid. Required for nucleoid occlusion (NO) phenomenon, which prevents Z-ring formation and cell division over the nucleoid. Acts as a DNA-associated cell division inhibitor that binds simultaneously chromosomal DNA and FtsZ, and disrupts the assembly of FtsZ polymers. SlmA-DNA-binding sequences (SBS) are dispersed on non-Ter regions of the chromosome, preventing FtsZ polymerization at these regions. The protein is Nucleoid occlusion factor SlmA of Shewanella amazonensis (strain ATCC BAA-1098 / SB2B).